A 34-amino-acid chain; its full sequence is Photosystem I reaction center subunit XII (34 aa).

Residues 9 to 29 (LIALSLIVVVHAGVLALRLGI) traverse the membrane as a helical segment.

Belongs to the PsaM family.

The protein localises to the cellular thylakoid membrane. The chain is Photosystem I reaction center subunit XII from Prochlorococcus marinus (strain MIT 9312).